A 321-amino-acid chain; its full sequence is MSYHKSSGTTLMVPLFMLLISVNYFMSCNAQLSTTFYDTTCPTALSTIRTSIRSSVSSNRRNAALVIRLLFHDCFVQGCDASLLLSGAGSERASPANDGVLGYEVIDAAKAAVERVCPGVVSCADILAVAARDASVAVGGPSWTVRLGRRDSTTSNAAQAATDLPRGNMVLSQLISNFANKGLNTREMVALSGSHTLGQARCIRFRGRIYNSTLRIEPNFNRSLSQACPPTGNDATLRPLDLVTPNSFDNNYYRNLVTSRGLLISDQVLFNADSTDSIVTEYVNNPATFAADFAAAMVKMSEIGVVTGTSGIVRTLCGNPS.

The N-terminal stretch at 1–30 (MSYHKSSGTTLMVPLFMLLISVNYFMSCNA) is a signal peptide. Glutamine 31 is subject to Pyrrolidone carboxylic acid. 4 cysteine pairs are disulfide-bonded: cysteine 41-cysteine 117, cysteine 74-cysteine 79, cysteine 123-cysteine 317, and cysteine 202-cysteine 228. Histidine 72 serves as the catalytic Proton acceptor. Residues aspartate 73, valine 76, glycine 78, aspartate 80, and serine 82 each contribute to the Ca(2+) site. Proline 165 lines the substrate pocket. Residue histidine 195 coordinates heme b. Residue threonine 196 coordinates Ca(2+). 2 N-linked (GlcNAc...) asparagine glycosylation sites follow: asparagine 211 and asparagine 221. The Ca(2+) site is built by aspartate 241, threonine 244, and aspartate 249.

This sequence belongs to the peroxidase family. Classical plant (class III) peroxidase subfamily. Requires heme b as cofactor. Ca(2+) is required as a cofactor. In terms of processing, N-glycosylated. As to expression, expressed in tracheary elements, roots, young and old hypocotyls, and stems in the partially glycosylated form and in roots and young hypocotyls in the fully glycosylated form. None of the isoforms is significantly expressed in leaves or cotyledons.

It is found in the secreted. The enzyme catalyses 2 a phenolic donor + H2O2 = 2 a phenolic radical donor + 2 H2O. In terms of biological role, removal of H(2)O(2), oxidation of toxic reductants, biosynthesis and degradation of lignin, suberization, auxin catabolism, response to environmental stresses such as wounding, pathogen attack and oxidative stress. These functions might be dependent on each isozyme/isoform in each plant tissue. Involved in the synthesis of highly polymerized lignins. This Zinnia elegans (Garden zinnia) protein is Basic peroxidase (POD3).